Reading from the N-terminus, the 460-residue chain is Phosphoglucomutase (460 aa).

Ser103 acts as the Phosphoserine intermediate in catalysis. Ser103 serves as a coordination point for Mg(2+). Substrate is bound by residues 103–104 and Lys113; that span reads SH. Mg(2+) is bound by residues Asp239, Asp241, and Asp243. Residues 243-244, Thr303, and 322-324 contribute to the substrate site; these read DR and EMS.

It belongs to the phosphohexose mutase family. The cofactor is Mg(2+).

The protein localises to the cytoplasm. The enzyme catalyses alpha-D-glucose 1-phosphate = alpha-D-glucose 6-phosphate. Functionally, this enzyme participates in both the breakdown and synthesis of glucose. This Neisseria meningitidis serogroup A / serotype 4A (strain DSM 15465 / Z2491) protein is Phosphoglucomutase (pgm).